The chain runs to 256 residues: Exosome complex component RRP41-like (256 aa).

The protein belongs to the RNase PH family. Probable component of the RNA exosome complex. In terms of tissue distribution, highly expressed in imbibed seeds and young seedlings.

The protein localises to the cytoplasm. Its subcellular location is the nucleus. Its function is as follows. Non-catalytic component of the RNA exosome complex which has 3'-&gt;5' exoribonuclease activity and participates in a multitude of cellular RNA processing, maturation and degradation events. In vitro, is a processive phosphorolytic exonuclease and requires a single-stranded poly(A) tail on the substrate RNA for its activity. Plays an important role in seed germination and early seedling growth by mediating specific cytoplasmic mRNA decay of transcripts coding for the abscisic acid (ABA) biosynthetic enzymes NCED5 and NCED6, and the ABA signaling transcription factors ABI3 and ABI4. The chain is Exosome complex component RRP41-like from Arabidopsis thaliana (Mouse-ear cress).